The following is a 40-amino-acid chain: MKVRKSLRSLKNKPGAQVVRRRGKVYVINKKDPRFKARQG.

This sequence belongs to the bacterial ribosomal protein bL36 family.

The protein is Large ribosomal subunit protein bL36 of Corynebacterium diphtheriae (strain ATCC 700971 / NCTC 13129 / Biotype gravis).